Reading from the N-terminus, the 48-residue chain is ATP synthase protein 8 (48 aa).

Residues 12–32 (LLTGGILAISLLLYFVATYLL) traverse the membrane as a helical segment.

This sequence belongs to the ATPase protein 8 family. F-type ATPases have 2 components, CF(1) - the catalytic core - and CF(0) - the membrane proton channel.

The protein localises to the mitochondrion membrane. In terms of biological role, mitochondrial membrane ATP synthase (F(1)F(0) ATP synthase or Complex V) produces ATP from ADP in the presence of a proton gradient across the membrane which is generated by electron transport complexes of the respiratory chain. F-type ATPases consist of two structural domains, F(1) - containing the extramembraneous catalytic core and F(0) - containing the membrane proton channel, linked together by a central stalk and a peripheral stalk. During catalysis, ATP synthesis in the catalytic domain of F(1) is coupled via a rotary mechanism of the central stalk subunits to proton translocation. Part of the complex F(0) domain. Minor subunit located with subunit a in the membrane. The chain is ATP synthase protein 8 (ATP8) from Candida parapsilosis (Yeast).